A 546-amino-acid chain; its full sequence is Chaperonin GroEL 1 (546 aa).

ATP is bound by residues 30 to 33 (TLGP), lysine 51, 87 to 91 (DGTTT), glycine 415, 479 to 481 (NAA), and aspartate 495. The segment at 526–546 (KEDAPMPGGMPGGMGGMGMDM) is disordered. Positions 534-546 (GMPGGMGGMGMDM) are enriched in gly residues.

The protein belongs to the chaperonin (HSP60) family. In terms of assembly, forms a cylinder of 14 subunits composed of two heptameric rings stacked back-to-back. Interacts with the co-chaperonin GroES.

It is found in the cytoplasm. The enzyme catalyses ATP + H2O + a folded polypeptide = ADP + phosphate + an unfolded polypeptide.. Its function is as follows. Together with its co-chaperonin GroES, plays an essential role in assisting protein folding. The GroEL-GroES system forms a nano-cage that allows encapsulation of the non-native substrate proteins and provides a physical environment optimized to promote and accelerate protein folding. The protein is Chaperonin GroEL 1 of Burkholderia vietnamiensis (strain G4 / LMG 22486) (Burkholderia cepacia (strain R1808)).